The primary structure comprises 275 residues: 4-diphosphocytidyl-2-C-methyl-D-erythritol kinase (275 aa).

K14 is a catalytic residue. 98 to 108 (PMGAGLGGGSS) serves as a coordination point for ATP. Residue D140 is part of the active site.

The protein belongs to the GHMP kinase family. IspE subfamily.

It catalyses the reaction 4-CDP-2-C-methyl-D-erythritol + ATP = 4-CDP-2-C-methyl-D-erythritol 2-phosphate + ADP + H(+). The protein operates within isoprenoid biosynthesis; isopentenyl diphosphate biosynthesis via DXP pathway; isopentenyl diphosphate from 1-deoxy-D-xylulose 5-phosphate: step 3/6. Catalyzes the phosphorylation of the position 2 hydroxy group of 4-diphosphocytidyl-2C-methyl-D-erythritol. The chain is 4-diphosphocytidyl-2-C-methyl-D-erythritol kinase from Francisella tularensis subsp. novicida (strain U112).